Consider the following 458-residue polypeptide: UDP-N-acetylmuramate--L-alanine ligase (458 aa).

Gly-112–Thr-118 contacts ATP.

It belongs to the MurCDEF family.

Its subcellular location is the cytoplasm. It catalyses the reaction UDP-N-acetyl-alpha-D-muramate + L-alanine + ATP = UDP-N-acetyl-alpha-D-muramoyl-L-alanine + ADP + phosphate + H(+). It participates in cell wall biogenesis; peptidoglycan biosynthesis. In terms of biological role, cell wall formation. In Acidobacterium capsulatum (strain ATCC 51196 / DSM 11244 / BCRC 80197 / JCM 7670 / NBRC 15755 / NCIMB 13165 / 161), this protein is UDP-N-acetylmuramate--L-alanine ligase.